Consider the following 345-residue polypeptide: Anthranilate phosphoribosyltransferase (345 aa).

5-phospho-alpha-D-ribose 1-diphosphate is bound by residues glycine 84, 87 to 88, threonine 92, 94 to 97, 112 to 120, and serine 124; these read GD, NIST, and KHGGRSVSS. Anthranilate is bound at residue glycine 84. Residue serine 96 participates in Mg(2+) binding. Arginine 170 contributes to the anthranilate binding site. Positions 229 and 230 each coordinate Mg(2+).

This sequence belongs to the anthranilate phosphoribosyltransferase family. In terms of assembly, homodimer. Mg(2+) serves as cofactor.

The catalysed reaction is N-(5-phospho-beta-D-ribosyl)anthranilate + diphosphate = 5-phospho-alpha-D-ribose 1-diphosphate + anthranilate. Its pathway is amino-acid biosynthesis; L-tryptophan biosynthesis; L-tryptophan from chorismate: step 2/5. Catalyzes the transfer of the phosphoribosyl group of 5-phosphorylribose-1-pyrophosphate (PRPP) to anthranilate to yield N-(5'-phosphoribosyl)-anthranilate (PRA). This chain is Anthranilate phosphoribosyltransferase, found in Herminiimonas arsenicoxydans.